We begin with the raw amino-acid sequence, 565 residues long: 13S globulin seed storage protein 1 (565 aa).

Residues 1 to 20 (MSTKLILSFSLCLMVLSCSA) form the signal peptide. 2 cysteine pairs are disulfide-bonded: C44–C77 and C120–C384. One can recognise a Cupin type-1 1 domain in the interval 49-331 (LTASEPSRRV…FRNVDQETIS (283 aa)). Disordered regions lie at residues 126-224 (SESE…IRDG), 271-301 (GQSKQSREDRRSQRQTREEGSDRQSRESDDD), and 356-376 (EYEEELQRERGDRKRGGSGRS). 3 stretches are compositionally biased toward basic and acidic residues: residues 137-224 (RDQR…IRDG), 275-297 (QSREDRRSQRQTREEGSDRQSRE), and 356-370 (EYEEELQRERGDRKR). The region spanning 390–539 (QNVNRPSRAD…SYDISTKEAF (150 aa)) is the Cupin type-1 2 domain.

It belongs to the 11S seed storage protein (globulins) family. In terms of assembly, hexamer; each subunit is composed of an acidic and a basic chain derived from a single precursor and linked by a disulfide bond. In terms of tissue distribution, expressed only in immature seeds.

Seed storage protein. This Fagopyrum esculentum (Common buckwheat) protein is 13S globulin seed storage protein 1 (FA02).